The primary structure comprises 203 residues: MGGSLRVAVLGAPGVGKTAIIRQFLFGDYPERHRPTDGPRLYRPAVLLDGAVYDLSIRDGDVAGPGSSPGGPEEWPDAKDWSLQDTDAFVLVYDICSPDSFDYVKALRQRIAETRPAGAPEAPILVVGNKRDRQRLRFGPRRALAALVRRGWRCGYLECSAKYNWHVLRLFRELLRCALVRARPAHPALRLQGALHPARCSLM.

The interval 1 to 203 is small GTPase-like; it reads MGGSLRVAVL…ALHPARCSLM (203 aa). 11-18 contacts GTP; that stretch reads GAPGVGKT. An Effector region motif is present at residues 33 to 42; sequence HRPTDGPRLY. GTP-binding positions include 59–62 and 129–132; these read DGDV and NKRD. Position 200 is a cysteine methyl ester (Cys200). Cys200 is lipidated: S-farnesyl cysteine. Residues 201-203 constitute a propeptide, removed in mature form; the sequence is SLM.

Belongs to the small GTPase superfamily. Ras family. Isoprenylation is essential for nucleolar localization, and the proliferation-inhibiting activity of RASL10A. As to expression, expression appears to be strictly limited to the central nervous system.

It localises to the cell membrane. Its subcellular location is the nucleus. It is found in the nucleolus. It catalyses the reaction GTP + H2O = GDP + phosphate + H(+). Its function is as follows. Potent inhibitor of cellular proliferation. The sequence is that of Ras-like protein family member 10A (RASL10A) from Homo sapiens (Human).